Reading from the N-terminus, the 668-residue chain is tRNA 5-methylaminomethyl-2-thiouridine biosynthesis bifunctional protein MnmC (668 aa).

The interval 1–245 (MKHYSIQPAN…KREMLCGVME (245 aa)) is tRNA (mnm(5)s(2)U34)-methyltransferase. Residues 270 to 668 (IGGGIASALL…LLKGKAVKAG (399 aa)) are FAD-dependent cmnm(5)s(2)U34 oxidoreductase.

The protein in the N-terminal section; belongs to the methyltransferase superfamily. tRNA (mnm(5)s(2)U34)-methyltransferase family. In the C-terminal section; belongs to the DAO family. The cofactor is FAD.

The protein resides in the cytoplasm. The enzyme catalyses 5-aminomethyl-2-thiouridine(34) in tRNA + S-adenosyl-L-methionine = 5-methylaminomethyl-2-thiouridine(34) in tRNA + S-adenosyl-L-homocysteine + H(+). Functionally, catalyzes the last two steps in the biosynthesis of 5-methylaminomethyl-2-thiouridine (mnm(5)s(2)U) at the wobble position (U34) in tRNA. Catalyzes the FAD-dependent demodification of cmnm(5)s(2)U34 to nm(5)s(2)U34, followed by the transfer of a methyl group from S-adenosyl-L-methionine to nm(5)s(2)U34, to form mnm(5)s(2)U34. The chain is tRNA 5-methylaminomethyl-2-thiouridine biosynthesis bifunctional protein MnmC from Escherichia coli O9:H4 (strain HS).